The following is a 439-amino-acid chain: MPSRKKLHLISLGCTKNLVDSEVMLGRLKEYEITDDNTEADVIIVNTCGFIDAAKEESINTVLNLHDERKEDSILVMSGCLSERYKEELQQDMPEIDIFTGVGDYEKIDELIASKQSTFSPEVYLATETSGRVITGSNYHAYIKIAEGCNQACSFCAIPSFKGKLHSRSLSSIEKEVRMLAEQGYYDFSFISQDSSSYGRDMDLKDGLIDLIKVVEAIEGVRSARILYLYPSTTTFELIDTIADSKIFQTYYDMPIQHIDDAVLKTMKRGFGEQKTIELLEHMKSKPNAFLRTSVIAGHPGESQRSFEKLCSFMEEFGFDRFNTFHYSNEETTTAYQMEQIPQDIINERAEILGEIAERSTLRSLEKMVGKTVELVIDGESDEHEYLLSARPLQWAVDIDGEILINDTSDLPVKYGKVYEAKVTELVGMQLLATLIKEC.

The region spanning lysine 5–serine 117 is the MTTase N-terminal domain. [4Fe-4S] cluster contacts are provided by cysteine 14, cysteine 48, cysteine 80, cysteine 149, cysteine 153, and cysteine 156. A Radical SAM core domain is found at threonine 135–arginine 363. One can recognise a TRAM domain in the interval glutamate 366–lysine 437.

Belongs to the methylthiotransferase family. RimO subfamily. [4Fe-4S] cluster serves as cofactor.

The protein resides in the cytoplasm. It catalyses the reaction L-aspartate(89)-[ribosomal protein uS12]-hydrogen + (sulfur carrier)-SH + AH2 + 2 S-adenosyl-L-methionine = 3-methylsulfanyl-L-aspartate(89)-[ribosomal protein uS12]-hydrogen + (sulfur carrier)-H + 5'-deoxyadenosine + L-methionine + A + S-adenosyl-L-homocysteine + 2 H(+). Catalyzes the methylthiolation of an aspartic acid residue of ribosomal protein uS12. The sequence is that of Ribosomal protein uS12 methylthiotransferase RimO from Sulfurovum sp. (strain NBC37-1).